A 378-amino-acid chain; its full sequence is tRNA N(3)-cytidine methyltransferase METTL2 (378 aa).

The S-adenosyl-L-methionine site is built by W78, Y82, G188, D213, D239, L240, and I260.

This sequence belongs to the methyltransferase superfamily. METL family. Monomer. Interacts with DALRD3.

It localises to the cytoplasm. It carries out the reaction cytidine(32) in tRNA(Thr) + S-adenosyl-L-methionine = N(3)-methylcytidine(32) in tRNA(Thr) + S-adenosyl-L-homocysteine + H(+). The catalysed reaction is cytidine(32) in tRNA(Arg)(CCU) + S-adenosyl-L-methionine = N(3)-methylcytidine(32) in tRNA(Arg)(CCU) + S-adenosyl-L-homocysteine + H(+). Functionally, S-adenosyl-L-methionine-dependent methyltransferase that mediates N(3)-methylcytidine modification of residue 32 of the tRNA anticodon loop of tRNA(Thr)(UGU) and tRNA(Arg)(CCU). N(3)-methylcytidine methylation by METTL2 requires the N6-threonylcarbamoylation of tRNA (t6A37) by the EKC/KEOPS complex as prerequisite. This is tRNA N(3)-cytidine methyltransferase METTL2 (METTL2) from Bos taurus (Bovine).